A 129-amino-acid chain; its full sequence is Regulator of ribonuclease activity B (129 aa).

This sequence belongs to the RraB family. As to quaternary structure, interacts with the C-terminal region of Rne.

The protein resides in the cytoplasm. In terms of biological role, globally modulates RNA abundance by binding to RNase E (Rne) and regulating its endonucleolytic activity. Can modulate Rne action in a substrate-dependent manner by altering the composition of the degradosome. The polypeptide is Regulator of ribonuclease activity B (Shewanella denitrificans (strain OS217 / ATCC BAA-1090 / DSM 15013)).